We begin with the raw amino-acid sequence, 210 residues long: Protein-methionine-sulfoxide reductase heme-binding subunit MsrQ (210 aa).

4 helical membrane passes run 15–35, 89–109, 122–142, and 160–180; these read DTLV…WLAW, LFAF…DLFF, PFIT…VTST, and LVYL…KADH.

This sequence belongs to the MsrQ family. Heterodimer of a catalytic subunit (MsrP) and a heme-binding subunit (MsrQ). Requires FMN as cofactor. The cofactor is heme b.

It is found in the cell inner membrane. Functionally, part of the MsrPQ system that repairs oxidized periplasmic proteins containing methionine sulfoxide residues (Met-O), using respiratory chain electrons. Thus protects these proteins from oxidative-stress damage caused by reactive species of oxygen and chlorine generated by the host defense mechanisms. MsrPQ is essential for the maintenance of envelope integrity under bleach stress, rescuing a wide series of structurally unrelated periplasmic proteins from methionine oxidation. MsrQ provides electrons for reduction to the reductase catalytic subunit MsrP, using the quinone pool of the respiratory chain. This chain is Protein-methionine-sulfoxide reductase heme-binding subunit MsrQ, found in Caulobacter vibrioides (strain ATCC 19089 / CIP 103742 / CB 15) (Caulobacter crescentus).